Reading from the N-terminus, the 178-residue chain is Caveolin-1 (178 aa).

Position 2 is an N-acetylserine (S2). A Phosphoserine modification is found at S2. Residues 2–94 (SGGKYVDSEG…WKASFTTFTV (93 aa)) form a required for homooligomerization region. Topologically, residues 2–104 (SGGKYVDSEG…TKYWFYRLLS (103 aa)) are cytoplasmic. An N6-acetyllysine; alternate modification is found at K5. A Glycyl lysine isopeptide (Lys-Gly) (interchain with G-Cter in ubiquitin); alternate cross-link involves residue K5. Y6 carries the post-translational modification Phosphotyrosine. At S9 the chain carries Phosphoserine. Y14 is subject to Phosphotyrosine; by ABL1. Y25 carries the phosphotyrosine modification. Residues K26, K30, K39, K47, and K57 each participate in a glycyl lysine isopeptide (Lys-Gly) (interchain with G-Cter in ubiquitin) cross-link. The tract at residues 82–94 (DGIWKASFTTFTV) is interaction with CAVIN3. The helical intramembrane region spans 105 to 125 (ALFGIPMALIWGIYFAILSFL). The Cytoplasmic portion of the chain corresponds to 126 to 178 (HIWAVVPCIKSFLIEIQCISRVYSIYVHTFCDPLFEAIGKIFSNIRINMQKEI). An interacts with SPRY1, SPRY2, SPRY3 and SPRY4 region spans residues 131 to 142 (VPCIKSFLIEIQ). 3 S-palmitoyl cysteine lipidation sites follow: C133, C143, and C156. An interacts with SPRY1, SPRY2, and SPRY4 region spans residues 149–160 (SIYVHTFCDPLF). Residues 167–178 (FSNIRINMQKEI) form an interacts with SPRY1, SPRY2, SPRY3 and SPRY4 region.

The protein belongs to the caveolin family. In terms of assembly, homooligomer. Interacts (via the N-terminus) with DPP4; the interaction is direct. Forms a stable heterooligomeric complex with CAV2 that targets to lipid rafts and drives caveolae formation. Interacts with PACSIN2; this interaction induces membrane tubulation. Interacts with BMX, BTK, CTNNB1, CDH1, GLIPR2, JUP, NOSTRIN, SNAP25 and STX1A. Interacts with SLC7A9. Interacts with TGFBR1. Interacts with CAVIN3 (via leucine-zipper domain) in a cholesterol-sensitive manner. Interacts with CAVIN1. Interacts with EHD2 in a cholesterol-dependent manner. Forms a ternary complex with UBXN6 and VCP; mediates CAV1 targeting to lysosomes for degradation. Interacts with ABCG1; this interaction regulates ABCG1-mediated cholesterol efflux. Interacts with NEU3; this interaction enhances NEU3 sialidase activity within caveola. Interacts (via C-terminus) with SPRY1, SPRY2 (via C-terminus), SPRY3, and SPRY4. Phosphorylated at Tyr-14 by ABL1 in response to oxidative stress. In terms of processing, ubiquitinated. Undergo monoubiquitination and multi- and/or polyubiquitination. Monoubiquitination of N-terminal lysines promotes integration in a ternary complex with UBXN6 and VCP which promotes oligomeric CAV1 targeting to lysosomes for degradation. Ubiquitinated by ZNRF1; leading to degradation and modulation of the TLR4-mediated immune response.

It localises to the golgi apparatus membrane. The protein resides in the cell membrane. Its subcellular location is the membrane. The protein localises to the caveola. It is found in the membrane raft. In terms of biological role, may act as a scaffolding protein within caveolar membranes. Forms a stable heterooligomeric complex with CAV2 that targets to lipid rafts and drives caveolae formation. Mediates the recruitment of CAVIN proteins (CAVIN1/2/3/4) to the caveolae. Interacts directly with G-protein alpha subunits and can functionally regulate their activity. Involved in the costimulatory signal essential for T-cell receptor (TCR)-mediated T-cell activation. Its binding to DPP4 induces T-cell proliferation and NF-kappa-B activation in a T-cell receptor/CD3-dependent manner. Recruits CTNNB1 to caveolar membranes and may regulate CTNNB1-mediated signaling through the Wnt pathway. Negatively regulates TGFB1-mediated activation of SMAD2/3 by mediating the internalization of TGFBR1 from membrane rafts leading to its subsequent degradation. Binds 20(S)-hydroxycholesterol (20(S)-OHC). The polypeptide is Caveolin-1 (CAV1) (Otolemur garnettii (Small-eared galago)).